The following is a 344-amino-acid chain: Succinylglutamate desuccinylase (344 aa).

Zn(2+) is bound by residues H63, E66, and H160. The active site involves E224.

It belongs to the AspA/AstE family. Succinylglutamate desuccinylase subfamily. Zn(2+) serves as cofactor.

It catalyses the reaction N-succinyl-L-glutamate + H2O = L-glutamate + succinate. It functions in the pathway amino-acid degradation; L-arginine degradation via AST pathway; L-glutamate and succinate from L-arginine: step 5/5. Functionally, transforms N(2)-succinylglutamate into succinate and glutamate. The chain is Succinylglutamate desuccinylase from Shewanella sp. (strain MR-7).